The primary structure comprises 342 residues: Aspartate carbamoyltransferase catalytic subunit (342 aa).

Arginine 59 and threonine 60 together coordinate carbamoyl phosphate. Residue lysine 87 participates in L-aspartate binding. Positions 109, 142, and 145 each coordinate carbamoyl phosphate. L-aspartate-binding residues include arginine 182 and arginine 253. Carbamoyl phosphate-binding residues include glycine 294 and proline 295.

The protein belongs to the aspartate/ornithine carbamoyltransferase superfamily. ATCase family. Heterododecamer (2C3:3R2) of six catalytic PyrB chains organized as two trimers (C3), and six regulatory PyrI chains organized as three dimers (R2).

The enzyme catalyses carbamoyl phosphate + L-aspartate = N-carbamoyl-L-aspartate + phosphate + H(+). The protein operates within pyrimidine metabolism; UMP biosynthesis via de novo pathway; (S)-dihydroorotate from bicarbonate: step 2/3. Functionally, catalyzes the condensation of carbamoyl phosphate and aspartate to form carbamoyl aspartate and inorganic phosphate, the committed step in the de novo pyrimidine nucleotide biosynthesis pathway. The sequence is that of Aspartate carbamoyltransferase catalytic subunit from Synechococcus sp. (strain WH7803).